The following is a 1082-amino-acid chain: uncharacterized protein (1082 aa).

A PNPLA domain is found at 50 to 319 (TTMTGGVSLA…LDNRPIGVLF (270 aa)). The GXSXG signature appears at 120–124 (GTSAG). Serine 122 (nucleophile) is an active-site residue. Aspartate 306 acts as the Proton acceptor in catalysis. The short motif at 306–308 (DGG) is the DGA/G element. The next 4 membrane-spanning stretches (helical) occupy residues 959–979 (IARS…AAAI), 982–1002 (VTVF…LVVL), 1012–1032 (LFAL…TPVV), and 1057–1077 (WWHP…IAAA).

It localises to the cell membrane. This is an uncharacterized protein from Mycobacterium tuberculosis (strain ATCC 25618 / H37Rv).